A 40-amino-acid chain; its full sequence is Muscarinic m1-toxin3 (40 aa).

An intrachain disulfide couples Cys3 to Cys24.

The protein belongs to the three-finger toxin family. Short-chain subfamily. Aminergic toxin sub-subfamily. In terms of assembly, monomer. Contains 4 disulfide bonds. Expressed by the venom gland.

The protein localises to the secreted. Binds irreversibly and specifically to M1 (CHRM1) muscarinic acetylcholine receptors, blocking further binding of antagonists and preventing the action of agonists. This chain is Muscarinic m1-toxin3, found in Dendroaspis angusticeps (Eastern green mamba).